The sequence spans 1177 residues: uncharacterized protein (1177 aa).

The signal sequence occupies residues 1-26 (MKKLLKKSKFWWFLLCGLSVSTILVA). Cys-27 carries the N-palmitoyl cysteine lipid modification. Cys-27 is lipidated: S-diacylglycerol cysteine.

This sequence belongs to the MG307/MG309/MG338 family.

Its subcellular location is the cell membrane. This is an uncharacterized protein from Mycoplasma genitalium (strain ATCC 33530 / DSM 19775 / NCTC 10195 / G37) (Mycoplasmoides genitalium).